Here is a 432-residue protein sequence, read N- to C-terminus: Glutamyl-tRNA reductase (432 aa).

Residues 55–58 (TCNR), serine 114, 119–121 (ETQ), and glutamine 125 each bind substrate. Cysteine 56 acts as the Nucleophile in catalysis. 194–199 (GAGEMI) contacts NADP(+).

Belongs to the glutamyl-tRNA reductase family. As to quaternary structure, homodimer.

It carries out the reaction (S)-4-amino-5-oxopentanoate + tRNA(Glu) + NADP(+) = L-glutamyl-tRNA(Glu) + NADPH + H(+). It functions in the pathway porphyrin-containing compound metabolism; protoporphyrin-IX biosynthesis; 5-aminolevulinate from L-glutamyl-tRNA(Glu): step 1/2. Its function is as follows. Catalyzes the NADPH-dependent reduction of glutamyl-tRNA(Glu) to glutamate 1-semialdehyde (GSA). The polypeptide is Glutamyl-tRNA reductase (Burkholderia thailandensis (strain ATCC 700388 / DSM 13276 / CCUG 48851 / CIP 106301 / E264)).